Reading from the N-terminus, the 226-residue chain is Leucyl/phenylalanyl-tRNA--protein transferase (226 aa).

The protein belongs to the L/F-transferase family.

The protein localises to the cytoplasm. It carries out the reaction N-terminal L-lysyl-[protein] + L-leucyl-tRNA(Leu) = N-terminal L-leucyl-L-lysyl-[protein] + tRNA(Leu) + H(+). It catalyses the reaction N-terminal L-arginyl-[protein] + L-leucyl-tRNA(Leu) = N-terminal L-leucyl-L-arginyl-[protein] + tRNA(Leu) + H(+). The enzyme catalyses L-phenylalanyl-tRNA(Phe) + an N-terminal L-alpha-aminoacyl-[protein] = an N-terminal L-phenylalanyl-L-alpha-aminoacyl-[protein] + tRNA(Phe). Its function is as follows. Functions in the N-end rule pathway of protein degradation where it conjugates Leu, Phe and, less efficiently, Met from aminoacyl-tRNAs to the N-termini of proteins containing an N-terminal arginine or lysine. This is Leucyl/phenylalanyl-tRNA--protein transferase from Pseudomonas aeruginosa (strain LESB58).